The primary structure comprises 340 residues: Protein B17 (340 aa).

This sequence belongs to the orthopoxvirus B17 protein family.

The sequence is that of Protein B17 from Vaccinia virus (strain Copenhagen) (VACV).